Consider the following 132-residue polypeptide: Small ribosomal subunit protein uS8 (132 aa).

This sequence belongs to the universal ribosomal protein uS8 family. As to quaternary structure, part of the 30S ribosomal subunit. Contacts proteins S5 and S12.

One of the primary rRNA binding proteins, it binds directly to 16S rRNA central domain where it helps coordinate assembly of the platform of the 30S subunit. In Streptococcus pyogenes serotype M49 (strain NZ131), this protein is Small ribosomal subunit protein uS8.